The following is a 597-amino-acid chain: Elongation factor 4 (597 aa).

One can recognise a tr-type G domain in the interval 2-184 (KHIRNFSIIA…EIVARIPAPV (183 aa)). Residues 14-19 (DHGKST) and 131-134 (NKID) each bind GTP.

The protein belongs to the TRAFAC class translation factor GTPase superfamily. Classic translation factor GTPase family. LepA subfamily.

Its subcellular location is the cell inner membrane. It catalyses the reaction GTP + H2O = GDP + phosphate + H(+). In terms of biological role, required for accurate and efficient protein synthesis under certain stress conditions. May act as a fidelity factor of the translation reaction, by catalyzing a one-codon backward translocation of tRNAs on improperly translocated ribosomes. Back-translocation proceeds from a post-translocation (POST) complex to a pre-translocation (PRE) complex, thus giving elongation factor G a second chance to translocate the tRNAs correctly. Binds to ribosomes in a GTP-dependent manner. The protein is Elongation factor 4 of Aeromonas salmonicida (strain A449).